We begin with the raw amino-acid sequence, 1145 residues long: Major DNA-binding protein (1145 aa).

The segment at 1115–1145 (APQAAAPQYSGSSSVAGKKRKANVILGDLDL) is required for nuclear localization.

Belongs to the herpesviridae major DNA-binding protein family. In terms of assembly, homooligomers. Forms double-helical filaments necessary for the formation of replication compartments within the host nucleus. Interacts with the origin-binding protein. Interacts with the helicase primase complex; this interaction stimulates primer synthesis activity of the helicase-primase complex. Interacts with the DNA polymerase. Interacts with the alkaline exonuclease; this interaction increases its nuclease processivity.

It is found in the host nucleus. Its function is as follows. Plays several crucial roles in viral infection. Participates in the opening of the viral DNA origin to initiate replication by interacting with the origin-binding protein. May disrupt loops, hairpins and other secondary structures present on ssDNA to reduce and eliminate pausing of viral DNA polymerase at specific sites during elongation. Promotes viral DNA recombination by performing strand-transfer, characterized by the ability to transfer a DNA strand from a linear duplex to a complementary single-stranded DNA circle. Can also catalyze the renaturation of complementary single strands. Additionally, reorganizes the host cell nucleus, leading to the formation of prereplicative sites and replication compartments. This process is driven by the protein which can form double-helical filaments in the absence of DNA. The sequence is that of Major DNA-binding protein from Equus caballus (Horse).